A 563-amino-acid chain; its full sequence is Nicalin (563 aa).

The first 29 residues, Met-1 to Gly-29, serve as a signal peptide directing secretion. Residues Ser-30 to Pro-522 lie on the Lumenal side of the membrane. Asn-232 carries N-linked (GlcNAc...) asparagine glycosylation. Residues Ala-523 to Ile-543 traverse the membrane as a helical segment. Residues Ala-544 to Phe-563 are Cytoplasmic-facing.

It belongs to the nicastrin family. May interact with the levamisole-sensitive nicotinic acetylcholine receptor (L-AChR). May interact with nra-4 in the ER. As to expression, expressed in body wall, pharyngeal, and vulval muscles, excretory canal cell, head and motor neurons, and vulval epithelium.

It localises to the endoplasmic reticulum membrane. Functionally, involved in the recognition and selection of protein complexes to exit the endoplasmic reticulum (ER). In muscles, regulates levamisole-sensitive nicotinic acetylcholine receptor (L-AChR) subunit composition, possibly by allowing only specific L-AChR subunit combinations to exit the ER. Specifically, may promote the inclusion of alpha subunits unc-38 and unc-29 into L-AChR. Regulates L-AChR sensitivity to agonists such as nicotine and levamisole at neuro-muscular junctions. In touch neurons, may prevent ER exit of incorrectly folded mec-4-mec-10 ion channel. The protein is Nicalin of Caenorhabditis elegans.